A 329-amino-acid polypeptide reads, in one-letter code: GMP reductase (329 aa).

C178 serves as the catalytic Thioimidate intermediate. 207–230 contributes to the NADP(+) binding site; the sequence is VIADGGIRTHGDIAKSIRMGATMV.

This sequence belongs to the IMPDH/GMPR family. GuaC type 2 subfamily.

It catalyses the reaction IMP + NH4(+) + NADP(+) = GMP + NADPH + 2 H(+). Functionally, catalyzes the irreversible NADPH-dependent deamination of GMP to IMP. It functions in the conversion of nucleobase, nucleoside and nucleotide derivatives of G to A nucleotides, and in maintaining the intracellular balance of A and G nucleotides. The protein is GMP reductase of Lactococcus lactis subsp. cremoris (strain SK11).